We begin with the raw amino-acid sequence, 472 residues long: MAGKTLYDKLWDSHLVKQRDDGSALIYIDRHIIHEVTSPQAFEGLRLAGRKPWRIDANIATPDHNVPTTPERKGGIEAIADQVSRLQVQTLDDNCDEYGIVEFKMNDVRQGIVHVIGPEQGATLPGMTVVCGDSHTSTHGAFGALAHGIGTSEVEHVLATQCLVAKKMKNMLVRVEGTLPFGVTAKDIVLAVIGKIGTAGGNGHAIEFAGSAIRELSVEGRMTICNMSIEAGARVGLVAADEKTVAYVKGRPFAPKDAEWDLAVEAWKDLVSDADAKFDTVVELDAAQIKPQVSWGTSPEMVLAVDQNVPDPAKEMDLVKRDSIVRALKYMGLSANQAITDIQLDRVFIGSCTNSRIEDLRAAAVIAKGRKVASTIKQAIVVPGSGLVKAQAESEGLDKIFLEAGFEWREPGCSMCLAMNPDRLESGEHCASTSNRNFEGRQGAGGRTHLVSPAMAAAAAVSGRFVDVRELI.

[4Fe-4S] cluster contacts are provided by Cys-352, Cys-413, and Cys-416.

It belongs to the aconitase/IPM isomerase family. LeuC type 1 subfamily. As to quaternary structure, heterodimer of LeuC and LeuD. Requires [4Fe-4S] cluster as cofactor.

The enzyme catalyses (2R,3S)-3-isopropylmalate = (2S)-2-isopropylmalate. It participates in amino-acid biosynthesis; L-leucine biosynthesis; L-leucine from 3-methyl-2-oxobutanoate: step 2/4. Functionally, catalyzes the isomerization between 2-isopropylmalate and 3-isopropylmalate, via the formation of 2-isopropylmaleate. In Pseudomonas fluorescens (strain ATCC BAA-477 / NRRL B-23932 / Pf-5), this protein is 3-isopropylmalate dehydratase large subunit.